The primary structure comprises 337 residues: Large ribosomal subunit protein uL3 (337 aa).

The protein belongs to the universal ribosomal protein uL3 family. In terms of assembly, part of the 50S ribosomal subunit. Forms a cluster with proteins L14 and L24e.

Functionally, one of the primary rRNA binding proteins, it binds directly near the 3'-end of the 23S rRNA, where it nucleates assembly of the 50S subunit. The polypeptide is Large ribosomal subunit protein uL3 (Methanosphaerula palustris (strain ATCC BAA-1556 / DSM 19958 / E1-9c)).